The chain runs to 152 residues: Deoxyuridine 5'-triphosphate nucleotidohydrolase (152 aa).

Residues 71-73 (RSG), Asn84, 88-90 (LID), and Met98 each bind substrate.

Belongs to the dUTPase family. The cofactor is Mg(2+).

The enzyme catalyses dUTP + H2O = dUMP + diphosphate + H(+). It functions in the pathway pyrimidine metabolism; dUMP biosynthesis; dUMP from dCTP (dUTP route): step 2/2. Functionally, this enzyme is involved in nucleotide metabolism: it produces dUMP, the immediate precursor of thymidine nucleotides and it decreases the intracellular concentration of dUTP so that uracil cannot be incorporated into DNA. The chain is Deoxyuridine 5'-triphosphate nucleotidohydrolase from Salmonella arizonae (strain ATCC BAA-731 / CDC346-86 / RSK2980).